Consider the following 131-residue polypeptide: Small ribosomal subunit protein uS8 (131 aa).

It belongs to the universal ribosomal protein uS8 family. As to quaternary structure, part of the 30S ribosomal subunit. Contacts proteins S5 and S12.

In terms of biological role, one of the primary rRNA binding proteins, it binds directly to 16S rRNA central domain where it helps coordinate assembly of the platform of the 30S subunit. The protein is Small ribosomal subunit protein uS8 of Azobacteroides pseudotrichonymphae genomovar. CFP2.